Consider the following 366-residue polypeptide: Chorismate synthase (366 aa).

NADP(+) is bound by residues arginine 48 and arginine 54. FMN-binding positions include 125-127 (RSS), 238-239 (NA), glycine 278, 293-297 (KPTSS), and arginine 319.

The protein belongs to the chorismate synthase family. Homotetramer. FMNH2 serves as cofactor.

It catalyses the reaction 5-O-(1-carboxyvinyl)-3-phosphoshikimate = chorismate + phosphate. It participates in metabolic intermediate biosynthesis; chorismate biosynthesis; chorismate from D-erythrose 4-phosphate and phosphoenolpyruvate: step 7/7. Catalyzes the anti-1,4-elimination of the C-3 phosphate and the C-6 proR hydrogen from 5-enolpyruvylshikimate-3-phosphate (EPSP) to yield chorismate, which is the branch point compound that serves as the starting substrate for the three terminal pathways of aromatic amino acid biosynthesis. This reaction introduces a second double bond into the aromatic ring system. The polypeptide is Chorismate synthase (Burkholderia multivorans (strain ATCC 17616 / 249)).